The chain runs to 396 residues: S-adenosylmethionine synthase (396 aa).

ATP is bound at residue His16. Mg(2+) is bound at residue Asp18. K(+) is bound at residue Glu44. L-methionine is bound by residues Glu57 and Gln100. The segment at 100–110 is flexible loop; sequence QSPDINQGVDR. ATP is bound by residues 165 to 167, 231 to 232, Asp240, 246 to 247, Ala263, and Lys267; these read DAK, KF, and RK. Asp240 is an L-methionine binding site. Lys271 contributes to the L-methionine binding site.

It belongs to the AdoMet synthase family. In terms of assembly, homotetramer; dimer of dimers. Mg(2+) is required as a cofactor. It depends on K(+) as a cofactor.

It localises to the cytoplasm. It carries out the reaction L-methionine + ATP + H2O = S-adenosyl-L-methionine + phosphate + diphosphate. Its pathway is amino-acid biosynthesis; S-adenosyl-L-methionine biosynthesis; S-adenosyl-L-methionine from L-methionine: step 1/1. In terms of biological role, catalyzes the formation of S-adenosylmethionine (AdoMet) from methionine and ATP. The overall synthetic reaction is composed of two sequential steps, AdoMet formation and the subsequent tripolyphosphate hydrolysis which occurs prior to release of AdoMet from the enzyme. This chain is S-adenosylmethionine synthase, found in Ectopseudomonas mendocina (strain ymp) (Pseudomonas mendocina).